The primary structure comprises 110 residues: B3 domain-containing protein LOC_Os02g10420 (110 aa).

A DNA-binding region (TF-B3) is located at residues 1 to 104 (MSAMLNENVP…VLSVTVHKAD (104 aa)).

The protein localises to the nucleus. The sequence is that of B3 domain-containing protein LOC_Os02g10420 from Oryza sativa subsp. japonica (Rice).